The chain runs to 258 residues: Small ribosomal subunit protein mS40 (258 aa).

Residues 1–35 (MAASVLNTVLRRLPMLSLFRGSHRVQVPLQTLCTK) constitute a mitochondrion transit peptide. 2 positions are modified to phosphoserine: Ser38 and Ser49. Positions 214-258 (SRLRRLYQGHLQEESGPPPESMPKMPPRTPAEASSTGQTGPQSAL) are disordered. Residues 229–242 (GPPPESMPKMPPRT) show a composition bias toward pro residues. The segment covering 245 to 258 (EASSTGQTGPQSAL) has biased composition (polar residues).

This sequence belongs to the bacterial ribosomal protein bS18 family. Mitochondrion-specific ribosomal protein mS40 subfamily. In terms of assembly, component of the mitochondrial small ribosomal subunit (mt-SSU). Mature mammalian 55S mitochondrial ribosomes consist of a small (28S) and a large (39S) subunit. The 28S small subunit contains a 12S ribosomal RNA (12S mt-rRNA) and 30 different proteins. The 39S large subunit contains a 16S rRNA (16S mt-rRNA), a copy of mitochondrial valine transfer RNA (mt-tRNA(Val)), which plays an integral structural role, and 52 different proteins. mS40 has a zinc binding site.

It is found in the mitochondrion. The chain is Small ribosomal subunit protein mS40 (MRPS18B) from Homo sapiens (Human).